Consider the following 308-residue polypeptide: Dioxygenase peniF (308 aa).

Residues histidine 144 and histidine 225 each contribute to the Fe cation site.

Belongs to the PhyH family. In terms of assembly, homodimer. Fe cation serves as cofactor.

Dioxygenase; part of the gene cluster that mediates the biosynthesis of penifulvin A, a potent insecticidal sesquiterpene that features a [5.5.5.6]dioxafenestrane ring. The first step of the pathway is performed by the sesquiterpene cyclase peniA that generates the angular triquinane scaffold silphinene via cyclization of the linear farnesyl pyrophosphate (FPP). The cytochrome P450 monooxygenase peniB and the flavin-dependent monooxygenase peniC then catalyze a series of oxidation reactions to transform silphinene into penifulvin A. The dioxygenases peniD and peniF, as well as the acetyltransferase peniE, do not seem to be involved in the biosynthesis of penifulvin A. In Penicillium patulum (Penicillium griseofulvum), this protein is Dioxygenase peniF.